The primary structure comprises 114 residues: Large ribosomal subunit protein uL22 (114 aa).

It belongs to the universal ribosomal protein uL22 family. As to quaternary structure, part of the 50S ribosomal subunit.

Its function is as follows. This protein binds specifically to 23S rRNA; its binding is stimulated by other ribosomal proteins, e.g. L4, L17, and L20. It is important during the early stages of 50S assembly. It makes multiple contacts with different domains of the 23S rRNA in the assembled 50S subunit and ribosome. Functionally, the globular domain of the protein is located near the polypeptide exit tunnel on the outside of the subunit, while an extended beta-hairpin is found that lines the wall of the exit tunnel in the center of the 70S ribosome. This Streptococcus pneumoniae (strain Taiwan19F-14) protein is Large ribosomal subunit protein uL22.